Consider the following 145-residue polypeptide: Beta sliding clamp (145 aa).

The protein belongs to the beta sliding clamp family. Forms a ring-shaped head-to-tail homodimer around DNA which binds and tethers DNA polymerases and other proteins to the DNA. The DNA replisome complex has a single clamp-loading complex (3 tau and 1 each of delta, delta', psi and chi subunits) which binds 3 Pol III cores (1 core on the leading strand and 2 on the lagging strand) each with a beta sliding clamp dimer. Additional proteins in the replisome are other copies of gamma, psi and chi, Ssb, DNA helicase and RNA primase.

It is found in the cytoplasm. Functionally, confers DNA tethering and processivity to DNA polymerases and other proteins. Acts as a clamp, forming a ring around DNA (a reaction catalyzed by the clamp-loading complex) which diffuses in an ATP-independent manner freely and bidirectionally along dsDNA. Initially characterized for its ability to contact the catalytic subunit of DNA polymerase III (Pol III), a complex, multichain enzyme responsible for most of the replicative synthesis in bacteria; Pol III exhibits 3'-5' exonuclease proofreading activity. The beta chain is required for initiation of replication as well as for processivity of DNA replication. The chain is Beta sliding clamp (dnaN) from Vibrio harveyi (Beneckea harveyi).